The sequence spans 412 residues: Serine hydroxymethyltransferase (412 aa).

(6S)-5,6,7,8-tetrahydrofolate is bound by residues L117 and 121–123; that span reads GHL. The residue at position 226 (K226) is an N6-(pyridoxal phosphate)lysine. 349–351 provides a ligand contact to (6S)-5,6,7,8-tetrahydrofolate; sequence SPF.

This sequence belongs to the SHMT family. In terms of assembly, homodimer. It depends on pyridoxal 5'-phosphate as a cofactor.

The protein localises to the cytoplasm. It catalyses the reaction (6R)-5,10-methylene-5,6,7,8-tetrahydrofolate + glycine + H2O = (6S)-5,6,7,8-tetrahydrofolate + L-serine. It participates in one-carbon metabolism; tetrahydrofolate interconversion. It functions in the pathway amino-acid biosynthesis; glycine biosynthesis; glycine from L-serine: step 1/1. Catalyzes the reversible interconversion of serine and glycine with tetrahydrofolate (THF) serving as the one-carbon carrier. This reaction serves as the major source of one-carbon groups required for the biosynthesis of purines, thymidylate, methionine, and other important biomolecules. Also exhibits THF-independent aldolase activity toward beta-hydroxyamino acids, producing glycine and aldehydes, via a retro-aldol mechanism. The sequence is that of Serine hydroxymethyltransferase from Lawsonia intracellularis (strain PHE/MN1-00).